Here is a 372-residue protein sequence, read N- to C-terminus: Flagellar P-ring protein (372 aa).

The signal sequence occupies residues 1 to 26 (MNLSSLPFRLLAAAVALCAIAAPASA).

It belongs to the FlgI family. In terms of assembly, the basal body constitutes a major portion of the flagellar organelle and consists of four rings (L,P,S, and M) mounted on a central rod.

The protein localises to the periplasm. Its subcellular location is the bacterial flagellum basal body. Functionally, assembles around the rod to form the L-ring and probably protects the motor/basal body from shearing forces during rotation. The chain is Flagellar P-ring protein from Xanthomonas axonopodis pv. citri (strain 306).